Consider the following 271-residue polypeptide: Hematopoietically-expressed homeobox protein Hhex (271 aa).

Residues 1 to 138 are interaction with SOX13; it reads MQFPHPGPAA…PFLQRPLHKR (138 aa). At Ser54 the chain carries Phosphoserine. The segment at residues 138-197 is a DNA-binding region (homeobox); the sequence is RKGGQVRFSNDQTVELEKKFETQKYLSPPERKRLAKMLQLSERQVKTWFQNRRAKWRRLK. The interval 138-271 is required for WNT signaling induction; that stretch reads RKGGQVRFSN…EGDKGYFNAG (134 aa). The interval 195–271 is disordered; that stretch reads RLKQENPQSN…EGDKGYFNAG (77 aa). Polar residues predominate over residues 212-242; that stretch reads LDTSCEQGQDLPSEQNKGASLDRSQCSPSPA. The span at 245-261 shows a compositional bias: acidic residues; the sequence is EDPDSEISEDSDQEVDI.

Interacts with CD81; the interaction prevents nuclear translocation of HHEX. Interacts (via N-terminus) with SOX13; abolishes the SOX13-mediated inhibition of WNT-mediated transcriptional activity via competitive inhibition of the SOX13-TCF7 complex. Interacts with EIF4E; the interaction inhibits EIF4E-mediated mRNA nuclear export.

It localises to the nucleus. The protein localises to the nuclear body. It is found in the cytoplasm. Its function is as follows. Recognizes the DNA sequence 5'-ATTAA-3'. Transcriptional repressor. Activator of WNT-mediated transcription in conjunction with CTNNB1. Establishes anterior identity at two levels; acts early to enhance canonical WNT-signaling by repressing expression of TLE4, and acts later to inhibit NODAL-signaling by directly targeting NODAL. Inhibits EIF4E-mediated mRNA nuclear export. May play a role in hematopoietic differentiation. The sequence is that of Hematopoietically-expressed homeobox protein Hhex (Hhex) from Mus musculus (Mouse).